Here is a 339-residue protein sequence, read N- to C-terminus: NADH-quinone oxidoreductase subunit H (339 aa).

8 helical membrane passes run 7-27 (LFWI…AVAY), 77-97 (VLFV…WAVI), 112-132 (LLYI…AGWA), 149-169 (VVSY…AAGS), 180-200 (AGGI…VYWI), 235-255 (VFFL…AVMF), 276-296 (VPGV…YLWF), and 315-335 (VLIP…VTGF).

It belongs to the complex I subunit 1 family. As to quaternary structure, NDH-1 is composed of 14 different subunits. Subunits NuoA, H, J, K, L, M, N constitute the membrane sector of the complex.

It localises to the cell inner membrane. The enzyme catalyses a quinone + NADH + 5 H(+)(in) = a quinol + NAD(+) + 4 H(+)(out). In terms of biological role, NDH-1 shuttles electrons from NADH, via FMN and iron-sulfur (Fe-S) centers, to quinones in the respiratory chain. The immediate electron acceptor for the enzyme in this species is believed to be ubiquinone. Couples the redox reaction to proton translocation (for every two electrons transferred, four hydrogen ions are translocated across the cytoplasmic membrane), and thus conserves the redox energy in a proton gradient. This subunit may bind ubiquinone. The polypeptide is NADH-quinone oxidoreductase subunit H (Alkalilimnicola ehrlichii (strain ATCC BAA-1101 / DSM 17681 / MLHE-1)).